Consider the following 72-residue polypeptide: Translation initiation factor IF-1 (72 aa).

Positions 1–72 (MAKDDVIEVD…DKGRITFRYK (72 aa)) constitute an S1-like domain.

Belongs to the IF-1 family. As to quaternary structure, component of the 30S ribosomal translation pre-initiation complex which assembles on the 30S ribosome in the order IF-2 and IF-3, IF-1 and N-formylmethionyl-tRNA(fMet); mRNA recruitment can occur at any time during PIC assembly.

Its subcellular location is the cytoplasm. Its function is as follows. One of the essential components for the initiation of protein synthesis. Stabilizes the binding of IF-2 and IF-3 on the 30S subunit to which N-formylmethionyl-tRNA(fMet) subsequently binds. Helps modulate mRNA selection, yielding the 30S pre-initiation complex (PIC). Upon addition of the 50S ribosomal subunit IF-1, IF-2 and IF-3 are released leaving the mature 70S translation initiation complex. This is Translation initiation factor IF-1 from Nitratiruptor sp. (strain SB155-2).